Consider the following 109-residue polypeptide: Small ribosomal subunit protein uS17 (109 aa).

Belongs to the universal ribosomal protein uS17 family. Part of the 30S ribosomal subunit.

Functionally, one of the primary rRNA binding proteins, it binds specifically to the 5'-end of 16S ribosomal RNA. This chain is Small ribosomal subunit protein uS17, found in Methanococcus vannielii.